The sequence spans 572 residues: Myb-like protein Y (572 aa).

A compositionally biased stretch (polar residues) spans Gln196–Gln211. Residues Gln196 to Glu283 are disordered. Composition is skewed to low complexity over residues Thr222–Thr237 and Asn260–Asn281. Positions Pro311–Leu360 constitute a Myb-like domain. The disordered stretch occupies residues Lys367–Pro456. Low complexity-rich tracts occupy residues Gln371–Thr392 and Ser414–Glu425. Residues Ser426–His435 show a composition bias toward basic and acidic residues. Positions Asp436 to Thr455 are enriched in low complexity.

This is Myb-like protein Y (mybY) from Dictyostelium discoideum (Social amoeba).